A 561-amino-acid polypeptide reads, in one-letter code: Dihydroxy-acid dehydratase (561 aa).

Residue D78 participates in Mg(2+) binding. Position 119 (C119) interacts with [2Fe-2S] cluster. Mg(2+) is bound by residues D120 and K121. K121 bears the N6-carboxylysine mark. C192 contributes to the [2Fe-2S] cluster binding site. E448 contacts Mg(2+). The active-site Proton acceptor is S474.

The protein belongs to the IlvD/Edd family. In terms of assembly, homodimer. [2Fe-2S] cluster serves as cofactor. It depends on Mg(2+) as a cofactor.

It carries out the reaction (2R)-2,3-dihydroxy-3-methylbutanoate = 3-methyl-2-oxobutanoate + H2O. It catalyses the reaction (2R,3R)-2,3-dihydroxy-3-methylpentanoate = (S)-3-methyl-2-oxopentanoate + H2O. It functions in the pathway amino-acid biosynthesis; L-isoleucine biosynthesis; L-isoleucine from 2-oxobutanoate: step 3/4. It participates in amino-acid biosynthesis; L-valine biosynthesis; L-valine from pyruvate: step 3/4. Its function is as follows. Functions in the biosynthesis of branched-chain amino acids. Catalyzes the dehydration of (2R,3R)-2,3-dihydroxy-3-methylpentanoate (2,3-dihydroxy-3-methylvalerate) into 2-oxo-3-methylpentanoate (2-oxo-3-methylvalerate) and of (2R)-2,3-dihydroxy-3-methylbutanoate (2,3-dihydroxyisovalerate) into 2-oxo-3-methylbutanoate (2-oxoisovalerate), the penultimate precursor to L-isoleucine and L-valine, respectively. This chain is Dihydroxy-acid dehydratase, found in Sulfurimonas denitrificans (strain ATCC 33889 / DSM 1251) (Thiomicrospira denitrificans (strain ATCC 33889 / DSM 1251)).